Consider the following 350-residue polypeptide: Biotin synthase (350 aa).

In terms of domain architecture, Radical SAM core spans 41–268; sequence NEVQISRLLS…KSRVRLSAGR (228 aa). [4Fe-4S] cluster is bound by residues Cys-56, Cys-60, and Cys-63. [2Fe-2S] cluster-binding residues include Cys-100, Cys-131, Cys-191, and Arg-263.

This sequence belongs to the radical SAM superfamily. Biotin synthase family. Homodimer. It depends on [4Fe-4S] cluster as a cofactor. Requires [2Fe-2S] cluster as cofactor.

It catalyses the reaction (4R,5S)-dethiobiotin + (sulfur carrier)-SH + 2 reduced [2Fe-2S]-[ferredoxin] + 2 S-adenosyl-L-methionine = (sulfur carrier)-H + biotin + 2 5'-deoxyadenosine + 2 L-methionine + 2 oxidized [2Fe-2S]-[ferredoxin]. It participates in cofactor biosynthesis; biotin biosynthesis; biotin from 7,8-diaminononanoate: step 2/2. In terms of biological role, catalyzes the conversion of dethiobiotin (DTB) to biotin by the insertion of a sulfur atom into dethiobiotin via a radical-based mechanism. The polypeptide is Biotin synthase (Shewanella halifaxensis (strain HAW-EB4)).